A 688-amino-acid polypeptide reads, in one-letter code: Potassium-transporting ATPase ATP-binding subunit (688 aa).

The next 4 membrane-spanning stretches (helical) occupy residues 37-57, 65-85, 219-239, and 262-282; these read FLVYISSILTTILYAVSLVGI, ILGITIILWLTVLFANFAEAI, IALQILLISLTIIFLLVTVSL, and VALLVCLAPTTIGALLSSIGI. The 4-aspartylphosphate intermediate role is filled by Asp313. ATP is bound by residues Asp350, Glu354, 383 to 390, and Lys401; that span reads FTAKTRMS. Mg(2+)-binding residues include Asp524 and Asp528. 3 consecutive transmembrane segments (helical) span residues 594-614, 622-642, and 668-688; these read FAIIPALFIGLYPGLSALNIM, AIFSAIIYNALIIVALIPLAL, and IIVPFIAIKVIDVLITAIGIV.

This sequence belongs to the cation transport ATPase (P-type) (TC 3.A.3) family. Type IA subfamily. As to quaternary structure, the system is composed of three essential subunits: KdpA, KdpB and KdpC.

It is found in the cell membrane. The enzyme catalyses K(+)(out) + ATP + H2O = K(+)(in) + ADP + phosphate + H(+). Part of the high-affinity ATP-driven potassium transport (or Kdp) system, which catalyzes the hydrolysis of ATP coupled with the electrogenic transport of potassium into the cytoplasm. This subunit is responsible for energy coupling to the transport system and for the release of the potassium ions to the cytoplasm. This chain is Potassium-transporting ATPase ATP-binding subunit, found in Clostridium botulinum (strain Alaska E43 / Type E3).